A 930-amino-acid polypeptide reads, in one-letter code: Isoleucine--tRNA ligase (930 aa).

Positions 57–67 (PYANGNIHVGH) match the 'HIGH' region motif. An L-isoleucyl-5'-AMP-binding site is contributed by E554. A 'KMSKS' region motif is present at residues 595–599 (KMSKS). Residue K598 participates in ATP binding. Residues C888, C891, C908, and C911 each contribute to the Zn(2+) site.

This sequence belongs to the class-I aminoacyl-tRNA synthetase family. IleS type 1 subfamily. Monomer. The cofactor is Zn(2+).

It is found in the cytoplasm. It catalyses the reaction tRNA(Ile) + L-isoleucine + ATP = L-isoleucyl-tRNA(Ile) + AMP + diphosphate. Its function is as follows. Catalyzes the attachment of isoleucine to tRNA(Ile). As IleRS can inadvertently accommodate and process structurally similar amino acids such as valine, to avoid such errors it has two additional distinct tRNA(Ile)-dependent editing activities. One activity is designated as 'pretransfer' editing and involves the hydrolysis of activated Val-AMP. The other activity is designated 'posttransfer' editing and involves deacylation of mischarged Val-tRNA(Ile). The polypeptide is Isoleucine--tRNA ligase (Streptococcus pneumoniae (strain ATCC BAA-255 / R6)).